A 123-amino-acid polypeptide reads, in one-letter code: Large ribosomal subunit protein bL12 (123 aa).

It belongs to the bacterial ribosomal protein bL12 family. In terms of assembly, homodimer. Part of the ribosomal stalk of the 50S ribosomal subunit. Forms a multimeric L10(L12)X complex, where L10 forms an elongated spine to which 2 to 4 L12 dimers bind in a sequential fashion. Binds GTP-bound translation factors.

Functionally, forms part of the ribosomal stalk which helps the ribosome interact with GTP-bound translation factors. Is thus essential for accurate translation. This chain is Large ribosomal subunit protein bL12, found in Maricaulis maris (strain MCS10) (Caulobacter maris).